The sequence spans 2153 residues: RNA-directed RNA polymerase L (2153 aa).

His36, Glu54, Asp97, Glu110, and Val111 together coordinate Mn(2+). Lys124 serves as the catalytic For endonuclease activity. Residues 957–1143 (TGKSIKFKRK…AINQEMWKSM (187 aa)) enclose the RdRp catalytic domain. Position 1100 (Asp1100) interacts with Mg(2+).

Belongs to the Bunyavirales RNA polymerase family. In terms of assembly, interacts with the viral nucleoprotein. It depends on Mn(2+) as a cofactor. Mg(2+) is required as a cofactor.

It is found in the host cytoplasm. The protein localises to the host perinuclear region. The catalysed reaction is RNA(n) + a ribonucleoside 5'-triphosphate = RNA(n+1) + diphosphate. RNA-dependent RNA polymerase, which is responsible for the replication and transcription of the viral RNA genome using antigenomic RNA as an intermediate. During transcription, synthesizes subgenomic RNAs and assures their capping by a cap-snatching mechanism, which involves the endonuclease activity cleaving the host capped pre-mRNAs. These short capped RNAs are then used as primers for viral transcription. Cleaves ssRNA substrates but not DNA. Seems to downregulate the expression of its own and heterologous mRNAs through its endonuclease activity. The chain is RNA-directed RNA polymerase L from Abrothrix longipilis (Long-haired grass mouse).